Reading from the N-terminus, the 457-residue chain is MATGKIVQIIGAVIDVEFPQDAVPKVYDALKVESGLTLEVQQQLGGGLVRCIALGTSDGLKRGLKVENTGNPIQVPVGTKTLGRIMNVLGEPIDEKGPIGEEARWDIHRAAPSYEEQSNSTELLETGIKVIDLICPFAKGGKVGLFGGAGVGKTVNMMELIRNIAIEHSGYSVFAGVGERTREGNDFYHEMTDSNVLDKVSLVYGQMNEPPGNRLRVALTGLTMAEKFRDEGRDVLFFVDNIYRYTLAGTEVSALLGRMPSAVGYQPTLAEEMGVLQERITSTKTGSITSVQAVYVPADDLTDPSPATTFAHLDSTVVLSRNIASLGIYPAVDPLDSTSRQLDPLVVGEEHYNVARGVQGTLQRYKELKDIIAILGMDELSEDDKLVVARARKIERFLSQPFFVAEVFTGSPGKYVSLKDTIRGFKGILEGEFDHIPEQAFYMAGSIDEVVERASKM.

147 to 154 (GGAGVGKT) provides a ligand contact to ATP.

The protein belongs to the ATPase alpha/beta chains family. As to quaternary structure, F-type ATPases have 2 components, CF(1) - the catalytic core - and CF(0) - the membrane proton channel. CF(1) has five subunits: alpha(3), beta(3), gamma(1), delta(1), epsilon(1). CF(0) has three main subunits: a(1), b(2) and c(9-12). The alpha and beta chains form an alternating ring which encloses part of the gamma chain. CF(1) is attached to CF(0) by a central stalk formed by the gamma and epsilon chains, while a peripheral stalk is formed by the delta and b chains.

The protein localises to the cell inner membrane. The enzyme catalyses ATP + H2O + 4 H(+)(in) = ADP + phosphate + 5 H(+)(out). Its function is as follows. Produces ATP from ADP in the presence of a proton gradient across the membrane. The catalytic sites are hosted primarily by the beta subunits. In Actinobacillus pleuropneumoniae serotype 5b (strain L20), this protein is ATP synthase subunit beta.